The following is a 231-amino-acid chain: Endonuclease NucS (231 aa).

Belongs to the NucS endonuclease family.

The protein localises to the cytoplasm. Cleaves both 3' and 5' ssDNA extremities of branched DNA structures. The polypeptide is Endonuclease NucS (Micrococcus luteus (strain ATCC 4698 / DSM 20030 / JCM 1464 / CCM 169 / CCUG 5858 / IAM 1056 / NBRC 3333 / NCIMB 9278 / NCTC 2665 / VKM Ac-2230) (Micrococcus lysodeikticus)).